A 616-amino-acid polypeptide reads, in one-letter code: Protein SpAN (616 aa).

The first 16 residues, 1–16 (MKLVLLLAGFAALAKC), serve as a signal peptide directing secretion. A propeptide spans 17–93 (SLAAPAGVQK…DQKAGRKKRK (77 aa)) (activation peptide). The disordered stretch occupies residues 30 to 67 (METSAPEKPSEATTLGLLKTPKPEPKDEEPSPGAFQGD). Residues 93–294 (KATIYESQRW…ELANRIYECD (202 aa)) form the Peptidase M12A domain. 6 disulfides stabilise this stretch: Cys134–Cys293, Cys162–Cys182, Cys299–Cys317, Cys319–Cys328, Cys340–Cys366, and Cys393–Cys413. Position 190 (His190) interacts with Zn(2+). Residue Glu191 is part of the active site. Residues His194 and His200 each coordinate Zn(2+). In terms of domain architecture, EGF-like spans 289–329 (RIYECDDVEDCSNADECLNGGYHDADCDCVCPSSYSGDLCQ). The 111-residue stretch at 340 to 450 (CSYRFTEMTG…RGFKATYVII (111 aa)) folds into the CUB 1 domain. The tract at residues 461-491 (TLQTTPPSTTTLQTTNPSTTTLQTTNPSTTT) is disordered. Disulfide bonds link Cys503–Cys529 and Cys556–Cys576. Positions 503-614 (CGGTFVGVEG…RGFVASYRAI (112 aa)) constitute a CUB 2 domain.

The cofactor is Zn(2+). As to expression, asymmetrically along the animal-vegetal axis of the blastula.

This chain is Protein SpAN (SPAN), found in Strongylocentrotus purpuratus (Purple sea urchin).